A 92-amino-acid chain; its full sequence is Small ribosomal subunit protein uS19 (92 aa).

It belongs to the universal ribosomal protein uS19 family.

In terms of biological role, protein S19 forms a complex with S13 that binds strongly to the 16S ribosomal RNA. The chain is Small ribosomal subunit protein uS19 from Cellvibrio japonicus (strain Ueda107) (Pseudomonas fluorescens subsp. cellulosa).